Here is a 312-residue protein sequence, read N- to C-terminus: Secreted RxLR effector protein 14 (312 aa).

The signal sequence occupies residues 1 to 20 (MHSFKLLLALIVAICTSCDA). The RxLR-dEER motif lies at 46–61 (RLLRAKDGKVRADEER).

The protein belongs to the RxLR effector family.

It localises to the secreted. Its subcellular location is the host nucleus. Functionally, secreted effector that completely suppresses the host cell death induced by cell death-inducing proteins. The polypeptide is Secreted RxLR effector protein 14 (Plasmopara viticola (Downy mildew of grapevine)).